Consider the following 286-residue polypeptide: Translocon-associated protein subunit alpha (286 aa).

A signal peptide spans 1-21; that stretch reads MRLLPRLLLLLLLVFPATVLL. Residues 22–207 lie on the Lumenal side of the membrane; sequence RGGPGGSLAE…EREDGLDGQT (186 aa). The segment at 28–83 is disordered; the sequence is SLAEAQDLSEDEETVEDSVIEDEDDEAEVEEDEPTDLAEDREEEDVSGEPEASPSA. The span at 34 to 75 shows a compositional bias: acidic residues; the sequence is DLSEDEETVEDSVIEDEDDEAEVEEDEPTDLAEDREEEDVSG. N-linked (GlcNAc...) asparagine glycosylation is found at Asn-136 and Asn-191. A helical transmembrane segment spans residues 208 to 228; that stretch reads IFMYMSLAGLGLLVVVGLHQL. At 229–286 the chain is on the cytoplasmic side; sequence LESRNRKRPIQKVEMGTSSQNDVDMSWIPQETLNQINKASPRRLPRKRPQKRSVGSDE. Ser-247 is modified (phosphoserine). Thr-260 is modified (phosphothreonine). The segment at 264-286 is disordered; sequence INKASPRRLPRKRPQKRSVGSDE. The residue at position 268 (Ser-268) is a Phosphoserine. Residues 268–279 are compositionally biased toward basic residues; sequence SPRRLPRKRPQK.

This sequence belongs to the TRAP-alpha family. In terms of assembly, heterotetramer of TRAP-alpha, TRAP-beta, TRAP-delta and TRAP-gamma. Interacts with palmitoylated calnexin (CALX), the interaction is required for efficient folding of glycosylated proteins. Post-translationally, phosphorylated in its cytoplasmic tail.

The protein localises to the endoplasmic reticulum membrane. Its function is as follows. TRAP proteins are part of a complex whose function is to bind calcium to the ER membrane and thereby regulate the retention of ER resident proteins. May be involved in the recycling of the translocation apparatus after completion of the translocation process or may function as a membrane-bound chaperone facilitating folding of translocated proteins. The sequence is that of Translocon-associated protein subunit alpha (SSR1) from Oryctolagus cuniculus (Rabbit).